Here is a 93-residue protein sequence, read N- to C-terminus: MKTIILFLTLLVISSSCTSIITKTMNSKETTYLDSPAVSPSIDQYLVDIHLGHSFLQGVMSFCYDCGKACFRRGKNLARCKKFVCRCTKSGIK.

The N-terminal stretch at 1–19 (MKTIILFLTLLVISSSCTS) is a signal peptide. Disulfide bonds link Cys-63–Cys-80, Cys-66–Cys-85, and Cys-70–Cys-87.

This sequence belongs to the DEFL family.

It is found in the secreted. The polypeptide is Defensin-like protein 210 (Arabidopsis thaliana (Mouse-ear cress)).